The sequence spans 406 residues: Testis-specific Y-encoded-like protein 4 (406 aa).

Disordered regions lie at residues 1 to 63 (MNGV…EHCG), 81 to 121 (GLED…AKPK), 161 to 189 (EAGA…TRPR), and 387 to 406 (VRVP…FQSG). Residues 8–20 (NELSLANTTTPSH) are compositionally biased toward polar residues. Residues 93 to 102 (DAPSAPVAAD) are compositionally biased toward low complexity. A compositionally biased stretch (basic and acidic residues) spans 167–188 (QEKKGLQKEKKVAGGGKEETRP).

The protein belongs to the nucleosome assembly protein (NAP) family.

The chain is Testis-specific Y-encoded-like protein 4 (Tspyl4) from Mus musculus (Mouse).